A 450-amino-acid chain; its full sequence is Na(+)/H(+) antiporter NhaA 2 (450 aa).

12 helical membrane-spanning segments follow: residues 43-63 (VGGA…NSPW), 86-106 (LTLG…VVGL), 124-144 (ALPM…FVAV), 155-175 (GWAI…AVIS), 185-205 (FLLT…AVFY), 208-228 (EINL…ALCV), 234-254 (SWWL…ESGV), 258-278 (VAGV…AGGP), 299-319 (VAVP…VSGL), 326-346 (PITL…IFLT), 364-384 (WIDV…SLLI), and 398-418 (FVKV…AVLL).

The protein belongs to the NhaA Na(+)/H(+) (TC 2.A.33) antiporter family.

It is found in the cell membrane. The enzyme catalyses Na(+)(in) + 2 H(+)(out) = Na(+)(out) + 2 H(+)(in). Its function is as follows. Na(+)/H(+) antiporter that extrudes sodium in exchange for external protons. The chain is Na(+)/H(+) antiporter NhaA 2 from Mycobacterium sp. (strain JLS).